The chain runs to 480 residues: MAARCSTRWLLVVVGTPRLPAISGRGARPPREGVVGAWLSRKLSVPAFASSLTSCGPRALLTLRPGVSLTGTKHNPFICTASFHTSAPLAKEDYYQILGVPRNASQKEIKKAYYQLAKKYHPDTNKDDPKAKEKFSQLAEAYEVLSDEVKRKQYDAYGSAGFDPGASGSQHSYWKGGPTVDPEELFRKIFGEFSSSSFGDFQTVFDQPQEYFMELTFNQAAKGVNKEFTVNIMDTCERCNGKGNEPGTKVQHCHYCGGSGMETINTGPFVMRSTCRRCGGRGSIIISPCVVCRGAGQAKQKKRVMIPVPAGVEDGQTVRMPVGKREIFITFRVQKSPVFRRDGADIHSDLFISIAQALLGGTARAQGLYETINVTIPPGTQTDQKIRMGGKGIPRINSYGYGDHYIHIKIRVPKRLTSRQQSLILSYAEDETDVEGTVNGVTLTSSGGSTMDSSAGSKARREAGEDEEGFLSKLKKMFTS.

Arg58 carries the omega-N-methylarginine; by CARM1 modification. One can recognise a J domain in the interval Asp93 to Gly158. Lys134 bears the N6-acetyllysine mark. Residues Gly223–Lys301 form a CR-type zinc finger. A Zn(2+)-binding site is contributed by Cys236. CXXCXGXG motif repeat units lie at residues Cys236–Gly243, Cys253–Gly260, Cys275–Gly282, and Cys289–Gly296. At Arg238 the chain carries Omega-N-methylarginine; by CARM1. Residues Cys239, Cys253, Cys256, Cys275, Cys278, Cys289, and Cys292 each contribute to the Zn(2+) site. Residue Arg293 is modified to Omega-N-methylarginine; by CARM1. Ser398 is modified (phosphoserine). Residues Leu443–Gly456 show a composition bias toward polar residues. Residues Leu443–Leu471 form a disordered region.

In terms of assembly, interacts with JAK2, HSPA9B and IFN-gammaR2 chain. Interacts with Ras GTPase-activating protein 1 (RASA1). Isoform 2 interacts with MUSK (via the cytoplasmic domain). Post-translationally, tyrosine phosphorylated. In terms of tissue distribution, widely expressed with highest levels in heart, liver, lung and skeletal muscles. Also expressed in keratinocytes; expression level and distribution is altered in basal cell carcinomas.

It localises to the mitochondrion matrix. The protein localises to the cytoplasm. It is found in the cytosol. The protein resides in the postsynaptic cell membrane. Its function is as follows. Modulates apoptotic signal transduction or effector structures within the mitochondrial matrix. Affect cytochrome C release from the mitochondria and caspase 3 activation, but not caspase 8 activation. Isoform 1 increases apoptosis triggered by both TNF and the DNA-damaging agent mytomycin C; in sharp contrast, isoform 2 suppresses apoptosis. Can modulate IFN-gamma-mediated transcriptional activity. Isoform 2 may play a role in neuromuscular junction development as an effector of the MUSK signaling pathway. This is DnaJ homolog subfamily A member 3, mitochondrial (DNAJA3) from Homo sapiens (Human).